The following is a 745-amino-acid chain: Probable copper-transporting ATPase PacS (745 aa).

Residues 1-94 are Cytoplasmic-facing; the sequence is MAQTINLQLE…PVFSAKLVTG (94 aa). The region spanning 3–68 is the HMA domain; that stretch reads QTINLQLEGM…AVERAGYHAR (66 aa). A metal cation contacts are provided by Cys-14 and Cys-17. The chain crosses the membrane as a helical span at residues 95–115; that stretch reads LVISAVLFFGSLPMMLGVNIP. The Extracellular portion of the chain corresponds to 116 to 125; the sequence is HFPHIFHDPW. Residues 126–145 traverse the membrane as a helical segment; the sequence is LQWLLATPVQFWSGAEFYRG. The Cytoplasmic segment spans residues 146–152; that stretch reads AWKSVRT. The helical transmembrane segment at 153–173 threads the bilayer; sequence RSATMDTLVALGTSAAYFYSV. At 174–193 the chain is on the extracellular side; that stretch reads AITLFPQWLTSQGLAAHVYF. A helical transmembrane segment spans residues 194 to 214; it reads EAAAVVITLILLGRSLEQRAR. The Cytoplasmic portion of the chain corresponds to 215-342; sequence RETSAAIRKL…KAPIQHFVDR (128 aa). The helical transmembrane segment at 343-365 threads the bilayer; the sequence is ITHWFVPTVIVVAIAAFCIWWLT. At 366–372 the chain is on the extracellular side; that stretch reads TGNITLA. The helical transmembrane segment at 373–390 threads the bilayer; sequence VLTLVEVLIIACPCALGL. At 391–543 the chain is on the cytoplasmic side; the sequence is ATPTSVMVGT…QAQQWEKEQK (153 aa). Asp-428 (4-aspartylphosphate intermediate) is an active-site residue. Residues 544–564 form a helical membrane-spanning segment; it reads TVIWLAVDTEVKALLAIADAI. The Extracellular segment spans residues 565–687; it reads KPSSPQVVQA…KLSRATMGNI (123 aa). Mg(2+)-binding residues include Asp-633 and Asp-637. The chain crosses the membrane as a helical span at residues 688-707; that stretch reads RQNLFFAFIYNVIGIPVAAG. Residues 708–719 lie on the Cytoplasmic side of the membrane; the sequence is LFYPLFGLLLNP. The helical transmembrane segment at 720–738 threads the bilayer; the sequence is ILAGAAMAFSSVSVVTNAL. Topologically, residues 739-745 are extracellular; sequence RLKKFCP.

The protein belongs to the cation transport ATPase (P-type) (TC 3.A.3) family. Type IB subfamily.

It is found in the cell membrane. It catalyses the reaction Cu(+)(in) + ATP + H2O = Cu(+)(out) + ADP + phosphate + H(+). Its function is as follows. May play a role in the osmotic adaptation. The polypeptide is Probable copper-transporting ATPase PacS (pacS) (Synechocystis sp. (strain ATCC 27184 / PCC 6803 / Kazusa)).